We begin with the raw amino-acid sequence, 527 residues long: Zinc finger CCCH-type with G patch domain-containing protein (527 aa).

The interval 97 to 126 (GEVSGSSSDMREREDEREEEDDGEVEGEVD) is disordered. Residues 111 to 125 (DEREEEDDGEVEGEV) show a composition bias toward acidic residues. The C3H1-type zinc-finger motif lies at 173-200 (QKSMKPCPFFLEDKCRFADNCRFSHGEV). Residues 268-312 (LREDDLPSCSDSEDDDNGEGEAAFPRVLTQEEDWAPSRSSSAFGG) form a disordered region. A G-patch domain is found at 317–363 (TRGIGSKLMLKMGYEYGKGLGKTSEGRVEPVLAVVLPKGKSLDQCAE). Disordered stretches follow at residues 369–396 (TQRKVAKGKDGQQVSRNKRTRKARAHNT), 410–444 (LGNGDANPEAGGTCGPPPSHTPSSQGAGVEAYKGG), and 505–527 (KAQELSAQRENRKADTHKKMTEF). Basic residues predominate over residues 384-393 (RNKRTRKARA). The span at 511 to 527 (AQRENRKADTHKKMTEF) shows a compositional bias: basic and acidic residues.

It is found in the nucleus. Its function is as follows. Transcription repressor that specifically binds the 5'-GGAG[GA]A[GA]A-3' consensus sequence. Represses transcription by recruiting the chromatin multiprotein complex NuRD to target promoters. Negatively regulates expression of EGFR, a gene involved in cell proliferation, survival and migration. The protein is Zinc finger CCCH-type with G patch domain-containing protein (zgpat) of Salmo salar (Atlantic salmon).